Consider the following 735-residue polypeptide: Type-3 glutamine synthetase (735 aa).

The region spanning 89-183 (THYCHWFLPL…IPTAFCSWTG (95 aa)) is the GS beta-grasp domain. Residues 188–621 (QKTPLLRSME…SLYDLVSTLV (434 aa)) form the GS catalytic domain.

This sequence belongs to the glutamine synthetase family. Type 3 subfamily. In terms of assembly, homohexamer.

The catalysed reaction is L-glutamate + NH4(+) + ATP = L-glutamine + ADP + phosphate + H(+). The chain is Type-3 glutamine synthetase (glnA3) from Dictyostelium discoideum (Social amoeba).